The following is a 192-amino-acid chain: Probable protein adenylyltransferase y4lH (192 aa).

The Fido domain occupies 52 to 190; the sequence is LDFAHYRALH…LAPLAAEIRR (139 aa). ATP contacts are provided by residues 82–83 and 139–141; these read KG and GNG.

It belongs to the fic family.

The enzyme catalyses L-tyrosyl-[protein] + ATP = O-(5'-adenylyl)-L-tyrosyl-[protein] + diphosphate. It catalyses the reaction L-threonyl-[protein] + ATP = 3-O-(5'-adenylyl)-L-threonyl-[protein] + diphosphate. Probable adenylyltransferase that mediates the addition of adenosine 5'-monophosphate (AMP) to specific residues of target proteins. This Sinorhizobium fredii (strain NBRC 101917 / NGR234) protein is Probable protein adenylyltransferase y4lH.